A 450-amino-acid polypeptide reads, in one-letter code: Folate synthesis bifunctional protein (450 aa).

The tract at residues 1–166 is HPPK; sequence MTTWNFVCLG…TFAELAAIYP (166 aa). Residues 180–441 form the Pterin-binding domain; sequence TQIMGIVNVT…QVEGNRRVLA (262 aa). The DHPS stretch occupies residues 182–450; it reads IMGIVNVTDD…AAAAWSGMPV (269 aa). Residue Asn187 participates in Mg(2+) binding. Residues Thr227, Asp267, Asn287, Asp358, Lys395, and 429–431 contribute to the (7,8-dihydropterin-6-yl)methyl diphosphate site; that span reads RVH.

In the C-terminal section; belongs to the DHPS family. This sequence in the N-terminal section; belongs to the HPPK family. Mg(2+) serves as cofactor.

The enzyme catalyses 6-hydroxymethyl-7,8-dihydropterin + ATP = (7,8-dihydropterin-6-yl)methyl diphosphate + AMP + H(+). It carries out the reaction (7,8-dihydropterin-6-yl)methyl diphosphate + 4-aminobenzoate = 7,8-dihydropteroate + diphosphate. The protein operates within cofactor biosynthesis; tetrahydrofolate biosynthesis; 2-amino-4-hydroxy-6-hydroxymethyl-7,8-dihydropteridine diphosphate from 7,8-dihydroneopterin triphosphate: step 4/4. It participates in cofactor biosynthesis; tetrahydrofolate biosynthesis; 7,8-dihydrofolate from 2-amino-4-hydroxy-6-hydroxymethyl-7,8-dihydropteridine diphosphate and 4-aminobenzoate: step 1/2. In Chlamydia muridarum (strain MoPn / Nigg), this protein is Folate synthesis bifunctional protein (folKP).